A 967-amino-acid chain; its full sequence is RNA polymerase-associated protein RapA (967 aa).

Positions 163–333 constitute a Helicase ATP-binding domain; it reads EVGQRHAPRV…FARLRLLDPN (171 aa). 176-183 lines the ATP pocket; it reads DEVGLGKT. The short motif at 279 to 282 is the DEAH box element; it reads DEAH. One can recognise a Helicase C-terminal domain in the interval 489–643; the sequence is RVEWLLNYLT…TCPTGRTIYD (155 aa).

This sequence belongs to the SNF2/RAD54 helicase family. RapA subfamily. As to quaternary structure, interacts with the RNAP. Has a higher affinity for the core RNAP than for the holoenzyme. Its ATPase activity is stimulated by binding to RNAP.

Functionally, transcription regulator that activates transcription by stimulating RNA polymerase (RNAP) recycling in case of stress conditions such as supercoiled DNA or high salt concentrations. Probably acts by releasing the RNAP, when it is trapped or immobilized on tightly supercoiled DNA. Does not activate transcription on linear DNA. Probably not involved in DNA repair. The chain is RNA polymerase-associated protein RapA from Pectobacterium carotovorum subsp. carotovorum (strain PC1).